Consider the following 530-residue polypeptide: 6-phosphofructo-2-kinase/fructose-2,6-bisphosphatase 2 (530 aa).

A compositionally biased stretch (polar residues) spans Met-1–Glu-15. A disordered region spans residues Met-1–Leu-21. Position 2 is an N-acetylserine (Ser-2). The interval Ser-2–Gln-248 is 6-phosphofructo-2-kinase. Ser-29 carries the post-translational modification Phosphoserine; by PKA. ATP is bound at residue Gly-45–Tyr-53. Positions 78 and 102 each coordinate beta-D-fructose 6-phosphate. Asp-128 is a catalytic residue. Positions 130 and 136 each coordinate beta-D-fructose 6-phosphate. Residue Cys-158 is part of the active site. Asn-167–Lys-172 serves as a coordination point for ATP. Beta-D-fructose 6-phosphate-binding residues include Lys-172, Arg-193, and Tyr-197. The segment at Pro-249 to His-530 is fructose-2,6-bisphosphatase. Arg-256 serves as a coordination point for beta-D-fructose 2,6-bisphosphate. The Tele-phosphohistidine intermediate role is filled by His-257. Beta-D-fructose 2,6-bisphosphate is bound at residue Gly-269. The active-site Proton donor/acceptor is Glu-326. 6 residues coordinate beta-D-fructose 2,6-bisphosphate: Tyr-337, Arg-351, Lys-355, Tyr-366, Gln-392, and Arg-396. Phe-348–Arg-351 is an ATP binding site. ATP-binding positions include Gln-392–Arg-396 and Tyr-428. Residues Arg-446–His-512 form a disordered region. Residues Thr-450–Ile-476 show a composition bias toward polar residues. Ser-466 bears the Phosphoserine; by AMPK and PKA mark. The residue at position 468 (Thr-468) is a Phosphothreonine. At Thr-475 the chain carries Phosphothreonine; by PKC. Ser-483 and Ser-493 each carry phosphoserine.

It in the C-terminal section; belongs to the phosphoglycerate mutase family. Homodimer. Forms a heterodimer with PFKFB3. Post-translationally, phosphorylation by AMPK stimulates activity.

It catalyses the reaction beta-D-fructose 2,6-bisphosphate + H2O = beta-D-fructose 6-phosphate + phosphate. It carries out the reaction beta-D-fructose 6-phosphate + ATP = beta-D-fructose 2,6-bisphosphate + ADP + H(+). Phosphorylation results in the activation of the kinase activity. Functionally, synthesis and degradation of fructose 2,6-bisphosphate. This is 6-phosphofructo-2-kinase/fructose-2,6-bisphosphatase 2 (PFKFB2) from Pongo abelii (Sumatran orangutan).